A 56-amino-acid chain; its full sequence is Small ribosomal subunit protein uS14 (56 aa).

It belongs to the universal ribosomal protein uS14 family.

This is Small ribosomal subunit protein uS14 (RPS29) from Kluyveromyces lactis (strain ATCC 8585 / CBS 2359 / DSM 70799 / NBRC 1267 / NRRL Y-1140 / WM37) (Yeast).